The chain runs to 267 residues: Nanos homolog 1 (267 aa).

The segment at phenylalanine 40–alanine 56 is essential for its translational repressor activity. Residues serine 57–arginine 94 are disordered. Positions proline 78–glutamate 90 are enriched in acidic residues. The segment at valine 188–leucine 242 adopts a Nanos-type zinc-finger fold. Zn(2+) is bound by residues cysteine 189, cysteine 192, histidine 205, cysteine 216, cysteine 224, cysteine 227, histidine 235, and cysteine 240. Short sequence motifs (C2HC) lie at residues cysteine 189 to cysteine 216 and cysteine 224 to cysteine 240. A disordered region spans residues serine 243–arginine 267. Pro residues predominate over residues lysine 244–arginine 255. Basic and acidic residues predominate over residues serine 256–arginine 267.

Belongs to the nanos family. In terms of assembly, interacts with PUM2, SNAPIN and CTNNB1. Interacts (via N-terminal region) with CTNND1. Interacts with DDX20 (via N-terminal region). Expressed in the oocyte. Transiently expressed in eight-cell embryos. At 12.5 dpc, it is re-expressed in the central nervous system and the expression continues in the adult brain, in which the hippocampal formation is the predominant region. Expressed in the seminiferous tubules of mature testis, but not in the primordial germ cells.

It is found in the cytoplasm. The protein localises to the perinuclear region. Functionally, may act as a translational repressor which regulates translation of specific mRNAs by forming a complex with PUM2 that associates with the 3'-UTR of mRNA targets. Capable of interfering with the proadhesive and anti-invasive functions of E-cadherin. Up-regulates the production of MMP14 to promote tumor cell invasion. Not essential for normal development. The chain is Nanos homolog 1 (Nanos1) from Mus musculus (Mouse).